The chain runs to 441 residues: Ribosomal protein uS12 methylthiotransferase RimO (441 aa).

The MTTase N-terminal domain occupies 8 to 118 (PKIGFVSLGC…VLQHVHHYVP (111 aa)). [4Fe-4S] cluster contacts are provided by cysteine 17, cysteine 53, cysteine 82, cysteine 150, cysteine 154, and cysteine 157. One can recognise a Radical SAM core domain in the interval 136-373 (LTPRHYAYLK…MQLQQQISAE (238 aa)). The TRAM domain maps to 376-441 (QEKVGREILV…DEYDLWGSRV (66 aa)).

This sequence belongs to the methylthiotransferase family. RimO subfamily. Requires [4Fe-4S] cluster as cofactor.

It localises to the cytoplasm. It catalyses the reaction L-aspartate(89)-[ribosomal protein uS12]-hydrogen + (sulfur carrier)-SH + AH2 + 2 S-adenosyl-L-methionine = 3-methylsulfanyl-L-aspartate(89)-[ribosomal protein uS12]-hydrogen + (sulfur carrier)-H + 5'-deoxyadenosine + L-methionine + A + S-adenosyl-L-homocysteine + 2 H(+). In terms of biological role, catalyzes the methylthiolation of an aspartic acid residue of ribosomal protein uS12. This chain is Ribosomal protein uS12 methylthiotransferase RimO, found in Salmonella typhi.